We begin with the raw amino-acid sequence, 637 residues long: Dihydrolipoyllysine-residue acetyltransferase component of pyruvate dehydrogenase complex, mitochondrial (637 aa).

The transit peptide at 1 to 85 directs the protein to the mitochondrion; sequence MWRVCVRRAQ…LLGSPGRRSY (85 aa). The interval 80-100 is disordered; it reads PGRRSYSLPPHQKVPLPSLSP. Residues 90 to 166 form the Lipoyl-binding 1 domain; sequence HQKVPLPSLS…PIGSIICITV (77 aa). Phosphoserine is present on S99. Position 131 is an N6-lipoyllysine (K131). Disordered regions lie at residues 189-219 and 307-340; these read QAAA…PPHM and LKPQ…PAGP. A compositionally biased stretch (low complexity) spans 201–211; sequence AAPTAPSAKAP. The Lipoyl-binding 2 domain maps to 218–287; that stretch reads HMQVSAVGEQ…PLGAPLCIIV (70 aa). Residues 310–321 are compositionally biased toward pro residues; it reads QAPPPVPPPVAA. Low complexity predominate over residues 322–333; sequence APPTAQPLAPTP. The Peripheral subunit-binding (PSBD) domain occupies 345 to 382; the sequence is FVSPLAKKLAAERGIDLTQVKGTGPEGRIIKKDIDSFV. R451 is a binding site for CoA. Position 456 is an N6-acetyllysine (K456). An N6-succinyllysine modification is found at K463. S465 provides a ligand contact to CoA. K537 bears the N6-succinyllysine mark. Positions 556, 557, and 581 each coordinate CoA. Residues H610 and D614 contribute to the active site.

The protein belongs to the 2-oxoacid dehydrogenase family. Part of the pyruvate dehydrogenase complex (PDHc) that is a multi-enzyme complex composed of multiple copies of three enzymes, pyruvate dehydrogenase (subunits PDH1A and PDHB, E1 component), dihydrolipoamide acetyltransferase (DLAT, E2 component), and dihydrolipoamide dehydrogenase (DLD, E3 component) to which is added an additional protein the E3-binding protein (PDHX, E3BP). In terms of structural architecture, the E2 and E3BP components assemble into a 60meric central core with icosahedral symmetry. The central core is decorated with E1 and E3 proteins. Currently, two alternative models for the E2:E3BP stoichiometry are considered as being either 48:12 (E2(48)-E3BP(12)) or 40:20 (E2(40)-E3BP(20)). Interacts with PDK2 and PDK3. Interacts with SIRT4. Interacts with PDHB. The cofactor is (R)-lipoate. Delipoylated at Lys-131 by SIRT4, delipoylation decreases the PHD complex activity. As to expression, detected at higher levels in cauda epididymal spermatazoa than in caput epididymal spermatazoa (at protein level).

The protein resides in the mitochondrion matrix. The catalysed reaction is N(6)-[(R)-dihydrolipoyl]-L-lysyl-[protein] + acetyl-CoA = N(6)-[(R)-S(8)-acetyldihydrolipoyl]-L-lysyl-[protein] + CoA. In terms of biological role, as part of the pyruvate dehydrogenase complex, catalyzes the transfers of an acetyl group to a lipoic acid moiety. The pyruvate dehydrogenase complex, catalyzes the overall conversion of pyruvate to acetyl-CoA and CO(2), and thereby links cytoplasmic glycolysis and the mitochondrial tricarboxylic acid (TCA) cycle. The polypeptide is Dihydrolipoyllysine-residue acetyltransferase component of pyruvate dehydrogenase complex, mitochondrial (Mesocricetus auratus (Golden hamster)).